Reading from the N-terminus, the 116-residue chain is Somatostatin (116 aa).

An N-terminal signal peptide occupies residues 1-24; it reads MLSCRLQCALAALSIVLALGCVTG. Residues 25–88 constitute a propeptide that is removed on maturation; it reads APSDPRLRQF…QDEMRLELQR (64 aa). Ala-43 carries the alanine amide modification. The interval 62–82 is disordered; the sequence is QTENDALEPEDLSQAAEQDEM. A disulfide bridge links Cys-105 with Cys-116.

It belongs to the somatostatin family. Post-translationally, C-terminal amidation of the neuronostatin peptide is required for its biological activity, including for the regulation of mean arterial pressure.

It is found in the secreted. Inhibits the secretion of pituitary hormones, including that of growth hormone/somatotropin (GH1), PRL, ACTH, luteinizing hormone (LH) and TSH. Also impairs ghrelin- and GnRH-stimulated secretion of GH1 and LH; the inhibition of ghrelin-stimulated secretion of GH1 can be further increased by neuronostatin. In terms of biological role, may enhance low-glucose-induced glucagon release by pancreatic alpha cells. This effect may be mediated by binding to GPR107 and PKA activation. May regulate cardiac contractile function. May compromise cardiomyocyte viability. In the central nervous system, may impair memory retention and may affect hippocampal excitability. May also have anxiolytic and anorexigenic effects. May play a role in arterial pressure regulation. May inhibit basal, but not ghrelin- or GnRH-stimulated secretion of GH1 or LH, but does not affect the release of other pituitary hormones, including PRL, ACTH, FSH or TSH. Potentiates inhibitory action of somatostatin on ghrelin-stimulated secretion of GH1, but not that on GnRH-stimulated secretion of LH. The chain is Somatostatin (SST) from Homo sapiens (Human).